The sequence spans 64 residues: MLEKCPHASVDCGASKIGITDNDPATATNRRLASTIRKPPIEHAAGPLGSTSRAGHRSYGGVAS.

Positions 35–64 (TIRKPPIEHAAGPLGSTSRAGHRSYGGVAS) are disordered.

This is an uncharacterized protein from Mycobacterium tuberculosis (strain ATCC 25618 / H37Rv).